An 88-amino-acid polypeptide reads, in one-letter code: Elongation factor 1-beta (88 aa).

Belongs to the EF-1-beta/EF-1-delta family.

Promotes the exchange of GDP for GTP in EF-1-alpha/GDP, thus allowing the regeneration of EF-1-alpha/GTP that could then be used to form the ternary complex EF-1-alpha/GTP/AAtRNA. In Halorubrum lacusprofundi (strain ATCC 49239 / DSM 5036 / JCM 8891 / ACAM 34), this protein is Elongation factor 1-beta.